A 519-amino-acid chain; its full sequence is Cytochrome P450 52E2 (519 aa).

A run of 2 helical transmembrane segments spans residues 10 to 30 and 44 to 64; these read MLGG…FYFI and PIFF…NAWF. Heme is bound at residue Cys461.

The protein belongs to the cytochrome P450 family. It depends on heme as a cofactor.

The protein localises to the membrane. Together with an NADPH cytochrome P450 the enzyme system catalyzes the terminal hydroxylation as the first step in the assimilation of alkanes and fatty acids. This Candida apicola (Yeast) protein is Cytochrome P450 52E2 (CYP52E2).